The sequence spans 101 residues: Small ribosomal subunit protein uS14 (101 aa).

Belongs to the universal ribosomal protein uS14 family. In terms of assembly, part of the 30S ribosomal subunit. Contacts proteins S3 and S10.

In terms of biological role, binds 16S rRNA, required for the assembly of 30S particles and may also be responsible for determining the conformation of the 16S rRNA at the A site. The polypeptide is Small ribosomal subunit protein uS14 (Burkholderia lata (strain ATCC 17760 / DSM 23089 / LMG 22485 / NCIMB 9086 / R18194 / 383)).